A 164-amino-acid chain; its full sequence is Anterior gradient protein 2-B (164 aa).

Residues 1–20 (MESVLKSLFVLLVATSFTLA) form the signal peptide. Short sequence motifs (homodimer stabilization; interchain) lie at residues 34–43 (SRGWGDNLEW) and 49–56 (EGLYKAKA).

The protein belongs to the AGR family. Monomer and homodimer.

It is found in the secreted. It localises to the endoplasmic reticulum. In Xenopus laevis (African clawed frog), this protein is Anterior gradient protein 2-B (agr2-b).